The primary structure comprises 333 residues: MDIANLIQNLKQTLQNASNERHLIELKNIFVKQHLLPLYDELKKSDNKKEMGLLINEFKQQIELITNQALVELNNKSDQIDLKKWANKTLFTPFIKNGHHHIINNIIDDIAQFFKKLNFEIVSGPEVVSPVYNFDHLNIDENHPARATADSFFINSVQMLRTHCTTTTAQVLENNPHKDIRIMSFGNVYRKDDDDATHSHQFNQVDFVWVKEGLTVANLKWLIDSLIKYLFGQNLKTRYRLSFFPFTEPSFEVDVQCFKCDLKGCAVCKKSTWIEIMGTGMLHENVLKAANINDIKTGMAFGVGIDRIAMLKYEIDDIRYLYSNNFKFNAQIK.

Residue glutamate 248 participates in Mg(2+) binding.

This sequence belongs to the class-II aminoacyl-tRNA synthetase family. Phe-tRNA synthetase alpha subunit type 1 subfamily. Tetramer of two alpha and two beta subunits. It depends on Mg(2+) as a cofactor.

It localises to the cytoplasm. It carries out the reaction tRNA(Phe) + L-phenylalanine + ATP = L-phenylalanyl-tRNA(Phe) + AMP + diphosphate + H(+). This chain is Phenylalanine--tRNA ligase alpha subunit, found in Ureaplasma urealyticum serovar 10 (strain ATCC 33699 / Western).